The following is a 273-amino-acid chain: uncharacterized protein (273 aa).

The helical transmembrane segment at 7-27 (LTLGICLVLLIILIVGYVIMT) threads the bilayer.

It belongs to the staphylococcal tandem lipoprotein family.

It localises to the cell membrane. This is an uncharacterized protein from Staphylococcus aureus (strain MSSA476).